Consider the following 1437-residue polypeptide: uncharacterized protein (1437 aa).

Residues 1-25 form the signal peptide; it reads MRRGCRHHLAAVVLLIATFPPLAYN. The Extracellular segment spans residues 26-1326; that stretch reads QNIGGINQNI…SRIKENYFKW (1301 aa). 7 N-linked (GlcNAc...) asparagine glycosylation sites follow: asparagine 103, asparagine 315, asparagine 364, asparagine 492, asparagine 605, asparagine 676, and asparagine 914. The NIDO domain occupies 193–356; sequence AFFGQQASQA…GRYMFRVDDV (164 aa). Residues 648–829 enclose the AMOP domain; it reads VKEKSREMCH…FRCQMFYWRR (182 aa). A helical membrane pass occupies residues 1327-1347; the sequence is LAVIAGIVGIIIVILLIFLVF. At 1348 to 1437 the chain is on the cytoplasmic side; sequence WCIKRKKLQE…QGMLGLNTSV (90 aa). A disordered region spans residues 1394-1419; sequence PRTVAMPPPRGTTATPMTLEPRGFSP.

It localises to the membrane. This is an uncharacterized protein from Caenorhabditis elegans.